The following is a 168-amino-acid chain: Ecotin (168 aa).

A signal peptide spans 1-21; the sequence is MKRLSIAITSLLMAASASTIA. A disulfide bridge connects residues Cys-76 and Cys-113.

This sequence belongs to the protease inhibitor I11 (ecotin) family. In terms of assembly, homodimer.

It localises to the periplasm. In terms of biological role, general inhibitor of pancreatic serine proteases: inhibits chymotrypsin, trypsin, elastases, factor X, kallikrein as well as a variety of other proteases. The protein is Ecotin of Yersinia enterocolitica serotype O:8 / biotype 1B (strain NCTC 13174 / 8081).